The sequence spans 275 residues: Adaptin ear-binding coat-associated protein 1 (275 aa).

A disordered region spans residues 170–191 (KGGASKPRTARGGGLSLLPPPP). Arg180 carries the omega-N-methylarginine modification. Thr211 carries the post-translational modification Phosphothreonine. Short sequence motifs (WXXF motif) lie at residues 252–255 (WGDF) and 272–275 (WVQF). The disordered stretch occupies residues 254-275 (DFSTASSSVPNQAPQPSNWVQF). Residues 256–275 (STASSSVPNQAPQPSNWVQF) are compositionally biased toward polar residues.

Belongs to the NECAP family. Interacts with AP1G1 and AP2A1 components of the adapter protein complexes AP-1 and AP-2. Interacts with the GAE domain proteins GGA1, GGA2 and GGA3.

It is found in the cytoplasmic vesicle. The protein localises to the clathrin-coated vesicle membrane. Its subcellular location is the cell membrane. In terms of biological role, involved in endocytosis. The sequence is that of Adaptin ear-binding coat-associated protein 1 (NECAP1) from Homo sapiens (Human).